A 1682-amino-acid polypeptide reads, in one-letter code: 1-phosphatidylinositol 4,5-bisphosphate phosphodiesterase eta-1 (1682 aa).

In terms of domain architecture, PH spans 20 to 128; the sequence is SVMQSGTQMI…WITGLKYLMA (109 aa). 3 consecutive EF-hand domains span residues 142–177, 178–214, and 226–246; these read THDQWVKQTFEEADKNGDGLLNIEEIHQLMHKLNVN, LPRRKVRQMFQEADTDENQGTLTFEEFCVFYKMMSLR, and DKKDHLTVEELAQFLKVEQKM. Residues Asp155, Asn157, Asp159, and Glu166 each coordinate Ca(2+). Residues 299–444 enclose the PI-PLC X-box domain; it reads QDMDQPLCNY…LKGKILVKGK (146 aa). The active site involves His314. Ca(2+)-binding residues include Asn315, Glu344, and Asp346. Residue His358 is part of the active site. Ca(2+) is bound at residue Glu393. Residues Lys442 and Lys444 each coordinate substrate. The disordered stretch occupies residues 534–588; that stretch reads LDVKESGKKSHGRSLMANFGKHKQKATKSRSKSYSTDDEDDSLQNPGKEGGQLYR. Over residues 553–564 the composition is skewed to basic residues; the sequence is GKHKQKATKSRS. The 114-residue stretch at 602–715 folds into the PI-PLC Y-box domain; that stretch reads LSDLVVYTNS…GYILKPQQMC (114 aa). Ser628 and Arg655 together coordinate substrate. A C2 domain is found at 716 to 844; that stretch reads KGTFNPFSGD…PGYRHVYLEG (129 aa). Ile759, Asp761, Asp785, Asp814, His815, and Asp816 together coordinate Ca(2+). Positions 992-1018 are enriched in basic and acidic residues; it reads DTDGKENCLAGDKDDRRKGAATRKDPH. Disordered regions lie at residues 992–1083, 1296–1321, and 1581–1603; these read DTDG…LSPR, NLPGFPDASPGQFPKSPTHGEDHSQV, and RAKEKQEAGKQKAMAQSTRGGVV. Positions 1019–1033 are enriched in low complexity; it reads FSNFNKKLSSSSSAL. Polar residues-rich tracts occupy residues 1040-1050 and 1065-1074; these read QGPTASVSNPE and NMTNDCQENH. Residues 1581–1590 are compositionally biased toward basic and acidic residues; that stretch reads RAKEKQEAGK.

The cofactor is Ca(2+). In terms of tissue distribution, expressed in brain and to a lower extent in lung. In brain, it is found in cerebrum, cerebellum and spinal cord.

It localises to the cytoplasm. The protein resides in the membrane. It catalyses the reaction a 1,2-diacyl-sn-glycero-3-phospho-(1D-myo-inositol-4,5-bisphosphate) + H2O = 1D-myo-inositol 1,4,5-trisphosphate + a 1,2-diacyl-sn-glycerol + H(+). The production of the second messenger molecules diacylglycerol (DAG) and inositol 1,4,5-trisphosphate (IP3) is mediated by calcium-activated phosphatidylinositol-specific phospholipase C enzymes. The protein is 1-phosphatidylinositol 4,5-bisphosphate phosphodiesterase eta-1 of Mus musculus (Mouse).